Reading from the N-terminus, the 202-residue chain is Glycerol-3-phosphate acyltransferase (202 aa).

A run of 5 helical transmembrane segments spans residues 11–31, 60–80, 88–108, 117–137, and 162–182; these read LLLFWGGIGYLLGSVPFGMVI, AAAAATLLLDGGKGAAAVLLA, AAQLAGLLAFLGHCFPVWLGF, FLGLMLALAWPVGIACCLTWL, and LLLGAPQAAVLSALLALVILW.

Belongs to the PlsY family. In terms of assembly, probably interacts with PlsX.

It localises to the cell inner membrane. The catalysed reaction is an acyl phosphate + sn-glycerol 3-phosphate = a 1-acyl-sn-glycero-3-phosphate + phosphate. It functions in the pathway lipid metabolism; phospholipid metabolism. Functionally, catalyzes the transfer of an acyl group from acyl-phosphate (acyl-PO(4)) to glycerol-3-phosphate (G3P) to form lysophosphatidic acid (LPA). This enzyme utilizes acyl-phosphate as fatty acyl donor, but not acyl-CoA or acyl-ACP. The sequence is that of Glycerol-3-phosphate acyltransferase from Ruegeria sp. (strain TM1040) (Silicibacter sp.).